A 114-amino-acid polypeptide reads, in one-letter code: Large ribosomal subunit protein uL22 (114 aa).

The protein belongs to the universal ribosomal protein uL22 family. As to quaternary structure, part of the 50S ribosomal subunit.

Functionally, this protein binds specifically to 23S rRNA; its binding is stimulated by other ribosomal proteins, e.g. L4, L17, and L20. It is important during the early stages of 50S assembly. It makes multiple contacts with different domains of the 23S rRNA in the assembled 50S subunit and ribosome. The globular domain of the protein is located near the polypeptide exit tunnel on the outside of the subunit, while an extended beta-hairpin is found that lines the wall of the exit tunnel in the center of the 70S ribosome. This chain is Large ribosomal subunit protein uL22, found in Streptococcus mutans serotype c (strain ATCC 700610 / UA159).